The chain runs to 259 residues: Thiazole synthase (259 aa).

The active-site Schiff-base intermediate with DXP is K99. Residues G160, 187 to 188 (AG), and 209 to 210 (NT) each bind 1-deoxy-D-xylulose 5-phosphate.

It belongs to the ThiG family. As to quaternary structure, homotetramer. Forms heterodimers with either ThiH or ThiS.

It is found in the cytoplasm. It catalyses the reaction [ThiS sulfur-carrier protein]-C-terminal-Gly-aminoethanethioate + 2-iminoacetate + 1-deoxy-D-xylulose 5-phosphate = [ThiS sulfur-carrier protein]-C-terminal Gly-Gly + 2-[(2R,5Z)-2-carboxy-4-methylthiazol-5(2H)-ylidene]ethyl phosphate + 2 H2O + H(+). Its pathway is cofactor biosynthesis; thiamine diphosphate biosynthesis. In terms of biological role, catalyzes the rearrangement of 1-deoxy-D-xylulose 5-phosphate (DXP) to produce the thiazole phosphate moiety of thiamine. Sulfur is provided by the thiocarboxylate moiety of the carrier protein ThiS. In vitro, sulfur can be provided by H(2)S. This Solibacter usitatus (strain Ellin6076) protein is Thiazole synthase.